Here is an 86-residue protein sequence, read N- to C-terminus: Apolipoprotein C-I (86 aa).

Residues 1 to 26 (MRLFLSLPVLVVVLLMILEGPGPAQG) form the signal peptide.

It belongs to the apolipoprotein C1 family.

The protein localises to the secreted. Its function is as follows. Inhibitor of lipoprotein binding to the low density lipoprotein (LDL) receptor, LDL receptor-related protein, and very low density lipoprotein (VLDL) receptor. Associates with high density lipoproteins (HDL) and the triacylglycerol-rich lipoproteins in the plasma and makes up about 10% of the protein of the VLDL and 2% of that of HDL. Appears to interfere directly with fatty acid uptake and is also the major plasma inhibitor of cholesteryl ester transfer protein (CETP). Binds free fatty acids and reduces their intracellular esterification. Modulates the interaction of APOE with beta-migrating VLDL and inhibits binding of beta-VLDL to the LDL receptor-related protein. This is Apolipoprotein C-I (APOC1) from Saimiri boliviensis boliviensis (Bolivian squirrel monkey).